Consider the following 335-residue polypeptide: uncharacterized protein (335 aa).

2 disordered regions span residues 152 to 179 and 252 to 271; these read IQLP…TVND and LDLF…SASL. A phosphoserine mark is found at Ser-257 and Ser-260. Over residues 257 to 271 the composition is skewed to polar residues; sequence SPSSENKSTAGSASL.

This is an uncharacterized protein from Schizosaccharomyces pombe (strain 972 / ATCC 24843) (Fission yeast).